We begin with the raw amino-acid sequence, 417 residues long: Valine--pyruvate aminotransferase (417 aa).

Lys249 carries the N6-(pyridoxal phosphate)lysine modification.

Belongs to the class-I pyridoxal-phosphate-dependent aminotransferase family. As to quaternary structure, homodimer. Pyridoxal 5'-phosphate serves as cofactor.

It is found in the cytoplasm. It carries out the reaction L-valine + pyruvate = 3-methyl-2-oxobutanoate + L-alanine. Functionally, involved in the biosynthesis of alanine. This is Valine--pyruvate aminotransferase (avtA) from Escherichia coli (strain K12).